The primary structure comprises 268 residues: Nickel import ATP-binding protein NikE (268 aa).

Residues 4 to 252 (LNVCGLSHHY…SSDAGRVLQN (249 aa)) form the ABC transporter domain. 45–52 (GRSGCGKS) provides a ligand contact to ATP.

The protein belongs to the ABC transporter superfamily. Nickel importer (TC 3.A.1.5.3) family. As to quaternary structure, the complex is composed of two ATP-binding proteins (NikD and NikE), two transmembrane proteins (NikB and NikC) and a solute-binding protein (NikA).

Its subcellular location is the cell inner membrane. It catalyses the reaction Ni(2+)(out) + ATP + H2O = Ni(2+)(in) + ADP + phosphate + H(+). Its function is as follows. Part of the ABC transporter complex NikABCDE involved in nickel import. Responsible for energy coupling to the transport system. The chain is Nickel import ATP-binding protein NikE from Shigella flexneri serotype 5b (strain 8401).